Reading from the N-terminus, the 297-residue chain is Protoheme IX farnesyltransferase (297 aa).

Helical transmembrane passes span 23–43 (VTQL…PGMP), 49–69 (VFGT…NCLI), 93–113 (IQVL…LYHL), 117–137 (LTMW…TVIL), 144–164 (NIVI…AAVA), 171–191 (AWVL…ALAL), 215–235 (RLHI…PYAI), 238–258 (SGAL…WYAW), and 275–295 (FSIL…WVGL).

This sequence belongs to the UbiA prenyltransferase family. Protoheme IX farnesyltransferase subfamily.

The protein resides in the cell inner membrane. It catalyses the reaction heme b + (2E,6E)-farnesyl diphosphate + H2O = Fe(II)-heme o + diphosphate. The protein operates within porphyrin-containing compound metabolism; heme O biosynthesis; heme O from protoheme: step 1/1. Converts heme B (protoheme IX) to heme O by substitution of the vinyl group on carbon 2 of heme B porphyrin ring with a hydroxyethyl farnesyl side group. The polypeptide is Protoheme IX farnesyltransferase (Bordetella bronchiseptica (strain ATCC BAA-588 / NCTC 13252 / RB50) (Alcaligenes bronchisepticus)).